The chain runs to 435 residues: Citrate synthase (435 aa).

Residues His311 and Asp370 contribute to the active site.

Belongs to the citrate synthase family. Homohexamer.

The catalysed reaction is oxaloacetate + acetyl-CoA + H2O = citrate + CoA + H(+). Its pathway is carbohydrate metabolism; tricarboxylic acid cycle; isocitrate from oxaloacetate: step 1/2. The sequence is that of Citrate synthase (gltA) from Rickettsia africae (strain ESF-5).